We begin with the raw amino-acid sequence, 8515 residues long: Nonribosomal peptide synthetase 8 (8515 aa).

2 adenylation regions span residues 59–736 and 1163–1705; these read REHH…YRCS and AKLS…EWVE. Residues 587–1159 form a condensation 1 region; it reads RRVVQWLENL…TVGEVALVGD (573 aa). In terms of domain architecture, Carrier 1 spans 615–691; sequence EPETAMERRL…ELAPRVKVAE (77 aa). At S652 the chain carries O-(pantetheine 4'-phosphoryl)serine. Residues 1732–1808 form the Carrier 2 domain; that stretch reads RGLTPTETVI…KLGRHADHSS (77 aa). S1769 carries the post-translational modification O-(pantetheine 4'-phosphoryl)serine. The tract at residues 1830 to 2273 is epimerase 1; the sequence is LSPIQQWFFE…TLYDCPLAAL (444 aa). The interval 2301 to 2709 is condensation 2; the sequence is SHIQEGILLS…RSPEAVLHDL (409 aa). The interval 2733-3266 is adenylation 3; that stretch reads QCLHWLIEQW…RMILSWLSEP (534 aa). A Carrier 3 domain is found at 3286-3362; sequence TTLGPVEKQM…KVTPRTISLS (77 aa). Position 3323 is an O-(pantetheine 4'-phosphoryl)serine (S3323). The segment at 3406-3819 is condensation 3; the sequence is SPMQEGILLA…DNSGCSVKTV (414 aa). A Carrier 4 domain is found at 3857 to 3933; the sequence is EPTNLIALTV…EVFEHARFSD (77 aa). S3894 carries the post-translational modification O-(pantetheine 4'-phosphoryl)serine. Residues 3953-4392 are epimerase 2; the sequence is LSPIQKLHFH…TPSDFQLLSL (440 aa). A condensation 4 region spans residues 4420-4823; that stretch reads PCSPMQEGIL…ARPRARLGTI (404 aa). Residues 4837–5363 are adenylation 4; the sequence is WNEQARRPVV…RKVNKWLESF (527 aa). In terms of domain architecture, Carrier 5 spans 5385-5461; the sequence is PPLTPIQQTI…SLAACATAII (77 aa). S5422 carries the O-(pantetheine 4'-phosphoryl)serine modification. The tract at residues 5508-5923 is condensation 5; it reads SPMQEGILFS…SLVDHLSLCS (416 aa). The tract at residues 5941–6459 is adenylation 5; that stretch reads ELRQCLHELI…GKVDRQALRR (519 aa). One can recognise a Carrier 6 domain in the interval 6482 to 6558; sequence PISTAEEQQM…DLATLLESPA (77 aa). The residue at position 6519 (S6519) is an O-(pantetheine 4'-phosphoryl)serine. The segment at 6606 to 6992 is condensation 6; sequence CTPLQESLMA…SQMKSVMGTL (387 aa). Residues 7030–7544 are adenylation 6; sequence VEDLIISRAQ…SSGKLARKGV (515 aa). One can recognise a Carrier 7 domain in the interval 7575-7651; sequence IASSSVERAI…HLASREDLTA (77 aa). An O-(pantetheine 4'-phosphoryl)serine modification is found at S7612. The tract at residues 7670–8119 is epimerase 3; that stretch reads LTPIQRFFFC…DYPRARLDYT (450 aa). The interval 8164–8504 is condensation 7; it reads HFIWKIAGTK…DPTSPLQFAD (341 aa). Residues 8488-8500 show a composition bias toward polar residues; that stretch reads AVNSVSSDPTSPL. The disordered stretch occupies residues 8488–8515; the sequence is AVNSVSSDPTSPLQFADGQDPMPVSHQP.

The protein belongs to the NRP synthetase family.

Its function is as follows. Nonribosomal peptide synthesis (NRPS) is a key mechanism responsible for the biosynthesis of bioactive metabolites which are potentially contributing to organismal virulence. However, contarary to other nonribosomal peptide synthases, NRPS8 does not encode a secreted peptide, but has more a structural role since it is involved in germ tube formation. The sequence is that of Nonribosomal peptide synthetase 8 (NRPS8) from Aspergillus fumigatus (strain ATCC MYA-4609 / CBS 101355 / FGSC A1100 / Af293) (Neosartorya fumigata).